A 302-amino-acid polypeptide reads, in one-letter code: Endochitinase 4 (302 aa).

A signal peptide spans 1-18 (EFTALSLLFSLLLLTASA). The Chitin-binding type-1 domain maps to 19-60 (EQCGKQAGGARCAAGLCCSNFGWCGNTNDYCGPGKCQSQCPS). Disulfide bonds link C21–C36, C30–C42, C35–C49, and C54–C58. The segment at 59–79 (PSGPSPKPPTPGPGPSGGDIG) is disordered. Positions 61–72 (GPSPKPPTPGPG) are enriched in pro residues. The active-site Proton donor is the E144. The cysteines at positions 162 and 182 are disulfide-linked.

It belongs to the glycosyl hydrolase 19 family. Chitinase class I subfamily.

It is found in the vacuole. It catalyses the reaction Random endo-hydrolysis of N-acetyl-beta-D-glucosaminide (1-&gt;4)-beta-linkages in chitin and chitodextrins.. Its function is as follows. Defense against chitin-containing fungal pathogens. The sequence is that of Endochitinase 4 (CHTB4) from Solanum tuberosum (Potato).